The following is a 390-amino-acid chain: Lipid-A-disaccharide synthase (390 aa).

This sequence belongs to the LpxB family.

It carries out the reaction a lipid X + a UDP-2-N,3-O-bis[(3R)-3-hydroxyacyl]-alpha-D-glucosamine = a lipid A disaccharide + UDP + H(+). Its pathway is bacterial outer membrane biogenesis; LPS lipid A biosynthesis. Functionally, condensation of UDP-2,3-diacylglucosamine and 2,3-diacylglucosamine-1-phosphate to form lipid A disaccharide, a precursor of lipid A, a phosphorylated glycolipid that anchors the lipopolysaccharide to the outer membrane of the cell. The polypeptide is Lipid-A-disaccharide synthase (Haemophilus influenzae (strain PittGG)).